Reading from the N-terminus, the 322-residue chain is MNLKAITLMQFDSNGRLRHLLTLEGLSRDTLLQLLDCAAQNCALGVDPMGKRNVLAGMAVCTLFFEPSTRTRHSFHLAAQRLGADVLNFDASMSSTSKGESACDTLKNLEAMGVRGFIVRHPEEIVIAQLAAVVGEGTVLINAGAGRSTHPTQALLDMLTLCQAKGNDFSKLKLLFVGDIKHSRVARSNLHALRTLGAGQIRVCGPTALLPHDGLLSGCVVSQDFDAMLEGVDVLMMLRLQRERMEEGLVPSLEHYHANYGLTAARLARAAPDAVVLHPGPINRGVEITDEVADGPQSWILRQASNGVMVRMAVLETLLGCA.

Carbamoyl phosphate contacts are provided by Arg70 and Thr71. L-aspartate is bound at residue Lys98. Carbamoyl phosphate is bound by residues Arg120, His150, and Gln153. The L-aspartate site is built by Arg184 and Arg239. Carbamoyl phosphate-binding residues include Gly280 and Pro281.

The protein belongs to the aspartate/ornithine carbamoyltransferase superfamily. ATCase family. Heterododecamer (2C3:3R2) of six catalytic PyrB chains organized as two trimers (C3), and six regulatory PyrI chains organized as three dimers (R2).

The catalysed reaction is carbamoyl phosphate + L-aspartate = N-carbamoyl-L-aspartate + phosphate + H(+). It participates in pyrimidine metabolism; UMP biosynthesis via de novo pathway; (S)-dihydroorotate from bicarbonate: step 2/3. In terms of biological role, catalyzes the condensation of carbamoyl phosphate and aspartate to form carbamoyl aspartate and inorganic phosphate, the committed step in the de novo pyrimidine nucleotide biosynthesis pathway. The sequence is that of Aspartate carbamoyltransferase catalytic subunit from Xylella fastidiosa (strain 9a5c).